The chain runs to 175 residues: Gamma-crystallin B (175 aa).

Beta/gamma crystallin 'Greek key' domains lie at 2 to 40 (GKITFYEDRGFQGRCYECSSDCPNLQPYFSRCNSIRVDS) and 41 to 83 (GCWM…RLIP). The interval 84 to 88 (QHSGT) is connecting peptide. Beta/gamma crystallin 'Greek key' domains lie at 89–129 (FRMR…NVLD) and 130–172 (GCWV…RRVM).

The protein belongs to the beta/gamma-crystallin family. Monomer.

Its function is as follows. Crystallins are the dominant structural components of the vertebrate eye lens. This Canis lupus familiaris (Dog) protein is Gamma-crystallin B (CRYGB).